Consider the following 300-residue polypeptide: Acetaldehyde dehydrogenase 3 (300 aa).

An NAD(+)-binding site is contributed by 11–14; sequence SGNI. Catalysis depends on Cys-126, which acts as the Acyl-thioester intermediate. Residues 157–165 and Asn-276 each bind NAD(+); that span reads SAGPGTRAN.

Belongs to the acetaldehyde dehydrogenase family.

It catalyses the reaction acetaldehyde + NAD(+) + CoA = acetyl-CoA + NADH + H(+). This is Acetaldehyde dehydrogenase 3 from Rhodococcus opacus (strain B4).